The primary structure comprises 147 residues: Hemoglobin subunit epsilon (147 aa).

The 145-residue stretch at 3–147 (HLTAEEKSSV…VATALAHKYH (145 aa)) folds into the Globin domain. Phosphoserine occurs at positions 14 and 51. Heme b-binding residues include H64 and H93.

Belongs to the globin family. In terms of assembly, heterotetramer of two alpha chains and two epsilon chains in early embryonic hemoglobin Gower-2; two zeta chains and two epsilon chains in early embryonic hemoglobin Gower-1. As to expression, red blood cells.

Functionally, the epsilon chain is a beta-type chain of early mammalian embryonic hemoglobin. The protein is Hemoglobin subunit epsilon (HBE1) of Carlito syrichta (Philippine tarsier).